The following is a 90-amino-acid chain: U7-theraphotoxin-Hhn1f (90 aa).

A signal peptide spans 1-19; the sequence is MKTAIFTVVLALAVFAVLS. A propeptide spanning residues 20-50 is cleaved from the precursor; sequence FGWEANEKALSEEFTELIHEKEAASETEARG. 3 cysteine pairs are disulfide-bonded: Cys-51/Cys-65, Cys-58/Cys-70, and Cys-64/Cys-81.

Belongs to the neurotoxin 10 (Hwtx-1) family. 13 (Hntx-13) subfamily. In terms of tissue distribution, expressed by the venom gland.

It localises to the secreted. Its function is as follows. Ion channel inhibitor. The polypeptide is U7-theraphotoxin-Hhn1f (Cyriopagopus hainanus (Chinese bird spider)).